Consider the following 411-residue polypeptide: Phosphoglycerate kinase (411 aa).

Substrate-binding positions include 19 to 21 (DLN), arginine 34, 57 to 60 (HQSR), arginine 114, and arginine 154. Residues glutamate 332 and 358–361 (GGHS) each bind ATP.

The protein belongs to the phosphoglycerate kinase family. As to quaternary structure, monomer.

The protein resides in the cytoplasm. It catalyses the reaction (2R)-3-phosphoglycerate + ATP = (2R)-3-phospho-glyceroyl phosphate + ADP. It functions in the pathway carbohydrate degradation; glycolysis; pyruvate from D-glyceraldehyde 3-phosphate: step 2/5. In Thermococcus kodakarensis (strain ATCC BAA-918 / JCM 12380 / KOD1) (Pyrococcus kodakaraensis (strain KOD1)), this protein is Phosphoglycerate kinase.